The following is a 209-amino-acid chain: Ribosomal RNA large subunit methyltransferase E (209 aa).

Residues glycine 63, tryptophan 65, aspartate 83, aspartate 99, and aspartate 124 each coordinate S-adenosyl-L-methionine. Lysine 164 acts as the Proton acceptor in catalysis.

The protein belongs to the class I-like SAM-binding methyltransferase superfamily. RNA methyltransferase RlmE family.

It is found in the cytoplasm. It carries out the reaction uridine(2552) in 23S rRNA + S-adenosyl-L-methionine = 2'-O-methyluridine(2552) in 23S rRNA + S-adenosyl-L-homocysteine + H(+). Its function is as follows. Specifically methylates the uridine in position 2552 of 23S rRNA at the 2'-O position of the ribose in the fully assembled 50S ribosomal subunit. This chain is Ribosomal RNA large subunit methyltransferase E, found in Shewanella sp. (strain MR-7).